The primary structure comprises 128 residues: Large ribosomal subunit protein bL12c (128 aa).

The interval 103-128 (QEGLGKDAAEDAKKQIEDAGGKVSLT) is disordered. The segment covering 106–122 (LGKDAAEDAKKQIEDAG) has biased composition (basic and acidic residues).

It belongs to the bacterial ribosomal protein bL12 family. As to quaternary structure, homodimer. Part of the ribosomal stalk of the 50S ribosomal subunit. Forms a multimeric L10(L12)X complex, where L10 forms an elongated spine to which 2 to 4 L12 dimers bind in a sequential fashion. Binds GTP-bound translation factors.

It localises to the plastid. The protein resides in the chloroplast. Its function is as follows. Forms part of the ribosomal stalk which helps the ribosome interact with GTP-bound translation factors. Is thus essential for accurate translation. The chain is Large ribosomal subunit protein bL12c from Thalassiosira pseudonana (Marine diatom).